We begin with the raw amino-acid sequence, 189 residues long: Adenylate kinase (189 aa).

An ATP-binding site is contributed by 10–15; that stretch reads AAGKGT. The NMP stretch occupies residues 30–59; it reads STGDMLRAAIASGSELGQKVKGVLDRGELV. AMP is bound by residues T31, R36, 57–59, 85–88, and Q92; these read ELV and GFPR. The tract at residues 126 to 136 is LID; it reads KRFAEQGRPDD. R127 contributes to the ATP binding site. Residues R133 and R144 each contribute to the AMP site. A172 is an ATP binding site.

Belongs to the adenylate kinase family. In terms of assembly, monomer.

It localises to the cytoplasm. The enzyme catalyses AMP + ATP = 2 ADP. It participates in purine metabolism; AMP biosynthesis via salvage pathway; AMP from ADP: step 1/1. In terms of biological role, catalyzes the reversible transfer of the terminal phosphate group between ATP and AMP. Plays an important role in cellular energy homeostasis and in adenine nucleotide metabolism. The protein is Adenylate kinase of Caulobacter sp. (strain K31).